The sequence spans 220 residues: MKFEKYIDHTLLKPESTRTQIDQIIDEAKAYNFKSVCVNPTHVKYAAERLADSEVLVCTVIGFPLGASTTATKAFETEDAIQNGADEIDMVINIGALKDGRFDDVQQDIEAVVKVAKGHTVKVIIETVLLDHDEIVKASELTKAAGADFVKTSTGFAGGGATAEDVKLMKDTVGADVEVKASGGVRNLEDFNKMVEAGATRIGASAGVQIMQGLEADSDY.

Asp89 functions as the Proton donor/acceptor in the catalytic mechanism. Lys151 acts as the Schiff-base intermediate with acetaldehyde in catalysis. Lys180 (proton donor/acceptor) is an active-site residue.

Belongs to the DeoC/FbaB aldolase family. DeoC type 1 subfamily.

It is found in the cytoplasm. It catalyses the reaction 2-deoxy-D-ribose 5-phosphate = D-glyceraldehyde 3-phosphate + acetaldehyde. The protein operates within carbohydrate degradation; 2-deoxy-D-ribose 1-phosphate degradation; D-glyceraldehyde 3-phosphate and acetaldehyde from 2-deoxy-alpha-D-ribose 1-phosphate: step 2/2. Functionally, catalyzes a reversible aldol reaction between acetaldehyde and D-glyceraldehyde 3-phosphate to generate 2-deoxy-D-ribose 5-phosphate. The polypeptide is Deoxyribose-phosphate aldolase 1 (Staphylococcus aureus (strain MSSA476)).